The following is a 708-amino-acid chain: Leukotoxin translocation ATP-binding protein LktB (708 aa).

One can recognise a Peptidase C39 domain in the interval methionine 1 to valine 126. Residues phenylalanine 155–glutamine 437 enclose the ABC transmembrane type-1 domain. 5 helical membrane passes run leucine 159 to valine 179, leucine 192 to leucine 212, alanine 270 to tyrosine 290, leucine 296 to leucine 316, and valine 389 to glycine 409. An ABC transporter domain is found at isoleucine 469–glutamine 704. Residue glycine 503–serine 510 coordinates ATP.

It belongs to the ABC transporter superfamily. Protein-1 exporter (TC 3.A.1.109) family. In terms of assembly, homodimer.

The protein resides in the cell inner membrane. It catalyses the reaction ATP + H2O + proteinSide 1 = ADP + phosphate + proteinSide 2.. In terms of biological role, part of the ABC transporter complex LktBD involved in leukotoxin export. Transmembrane domains (TMD) form a pore in the inner membrane and the ATP-binding domain (NBD) is responsible for energy generation. This is Leukotoxin translocation ATP-binding protein LktB (lktB) from Mannheimia haemolytica (Pasteurella haemolytica).